The following is a 157-amino-acid chain: 2-C-methyl-D-erythritol 2,4-cyclodiphosphate synthase (157 aa).

A divalent metal cation contacts are provided by D8 and H10. 4-CDP-2-C-methyl-D-erythritol 2-phosphate-binding positions include 8 to 10 (DVH) and 34 to 35 (HS). A divalent metal cation is bound at residue H42. Residues 56-58 (DIG), 61-65 (FPDTD), 100-106 (AQAPKMA), 132-135 (TTTE), F139, and R142 each bind 4-CDP-2-C-methyl-D-erythritol 2-phosphate.

Belongs to the IspF family. As to quaternary structure, homotrimer. It depends on a divalent metal cation as a cofactor.

It carries out the reaction 4-CDP-2-C-methyl-D-erythritol 2-phosphate = 2-C-methyl-D-erythritol 2,4-cyclic diphosphate + CMP. It functions in the pathway isoprenoid biosynthesis; isopentenyl diphosphate biosynthesis via DXP pathway; isopentenyl diphosphate from 1-deoxy-D-xylulose 5-phosphate: step 4/6. Its function is as follows. Involved in the biosynthesis of isopentenyl diphosphate (IPP) and dimethylallyl diphosphate (DMAPP), two major building blocks of isoprenoid compounds. Catalyzes the conversion of 4-diphosphocytidyl-2-C-methyl-D-erythritol 2-phosphate (CDP-ME2P) to 2-C-methyl-D-erythritol 2,4-cyclodiphosphate (ME-CPP) with a corresponding release of cytidine 5-monophosphate (CMP). The chain is 2-C-methyl-D-erythritol 2,4-cyclodiphosphate synthase from Serratia proteamaculans (strain 568).